The chain runs to 202 residues: Large ribosomal subunit protein mL40 (202 aa).

Residues 42–79 (IQHQQTASYASKGKSGPPAGMFSGQKAGSKKSKGPKQV) form a disordered region.

Belongs to the mitochondrion-specific ribosomal protein mL40 family. Component of the mitochondrial large ribosomal subunit (mt-LSU). Mature N.crassa 74S mitochondrial ribosomes consist of a small (37S) and a large (54S) subunit. The 37S small subunit contains a 16S ribosomal RNA (16S mt-rRNA) and 32 different proteins. The 54S large subunit contains a 23S rRNA (23S mt-rRNA) and 42 different proteins. mL40 is binding to NAD.

The protein localises to the mitochondrion. Functionally, component of the mitochondrial ribosome (mitoribosome), a dedicated translation machinery responsible for the synthesis of mitochondrial genome-encoded proteins, including at least some of the essential transmembrane subunits of the mitochondrial respiratory chain. The mitoribosomes are attached to the mitochondrial inner membrane and translation products are cotranslationally integrated into the membrane. The chain is Large ribosomal subunit protein mL40 (mrpl28) from Neurospora crassa (strain ATCC 24698 / 74-OR23-1A / CBS 708.71 / DSM 1257 / FGSC 987).